The sequence spans 303 residues: Coenzyme PQQ synthesis protein B (303 aa).

This sequence belongs to the PqqB family.

Its pathway is cofactor biosynthesis; pyrroloquinoline quinone biosynthesis. May be involved in the transport of PQQ or its precursor to the periplasm. The chain is Coenzyme PQQ synthesis protein B from Acinetobacter baumannii (strain AB0057).